The chain runs to 500 residues: Cytochrome P450 71B35 (500 aa).

A helical transmembrane segment spans residues 1–21 (MAHIWLLPLIFLVCILLAVFN). C439 serves as a coordination point for heme.

The protein belongs to the cytochrome P450 family. Heme serves as cofactor.

It is found in the membrane. The protein is Cytochrome P450 71B35 (CYP71B35) of Arabidopsis thaliana (Mouse-ear cress).